Here is an 87-residue protein sequence, read N- to C-terminus: DNA-directed RNA polymerase subunit omega (87 aa).

It belongs to the RNA polymerase subunit omega family. In terms of assembly, the RNAP catalytic core consists of 2 alpha, 1 beta, 1 beta' and 1 omega subunit. When a sigma factor is associated with the core the holoenzyme is formed, which can initiate transcription.

The enzyme catalyses RNA(n) + a ribonucleoside 5'-triphosphate = RNA(n+1) + diphosphate. Functionally, promotes RNA polymerase assembly. Latches the N- and C-terminal regions of the beta' subunit thereby facilitating its interaction with the beta and alpha subunits. This chain is DNA-directed RNA polymerase subunit omega, found in Thioalkalivibrio sulfidiphilus (strain HL-EbGR7).